Here is a 714-residue protein sequence, read N- to C-terminus: Polyribonucleotide nucleotidyltransferase (714 aa).

Mg(2+)-binding residues include aspartate 488 and aspartate 494. The KH domain occupies 555–614 (PRIEVMNIPTDKIRDVIGSGGKVIREIVEKTGAKINIEDDGTVKIASSNGKEIEAAKKWI). An S1 motif domain is found at 624–692 (GEIYEGTVVK…ERGKVRLSMK (69 aa)).

It belongs to the polyribonucleotide nucleotidyltransferase family. The cofactor is Mg(2+).

It localises to the cytoplasm. The catalysed reaction is RNA(n+1) + phosphate = RNA(n) + a ribonucleoside 5'-diphosphate. Involved in mRNA degradation. Catalyzes the phosphorolysis of single-stranded polyribonucleotides processively in the 3'- to 5'-direction. In Brucella melitensis biotype 2 (strain ATCC 23457), this protein is Polyribonucleotide nucleotidyltransferase.